Reading from the N-terminus, the 158-residue chain is Transcription elongation factor GreA (158 aa).

This sequence belongs to the GreA/GreB family.

Necessary for efficient RNA polymerase transcription elongation past template-encoded arresting sites. The arresting sites in DNA have the property of trapping a certain fraction of elongating RNA polymerases that pass through, resulting in locked ternary complexes. Cleavage of the nascent transcript by cleavage factors such as GreA or GreB allows the resumption of elongation from the new 3'terminus. GreA releases sequences of 2 to 3 nucleotides. This chain is Transcription elongation factor GreA, found in Wigglesworthia glossinidia brevipalpis.